Here is a 538-residue protein sequence, read N- to C-terminus: Dihomomethionine N-hydroxylase (538 aa).

Residues 8–28 form a helical membrane-spanning segment; that stretch reads LPYPFHILLVFILSMASITLL.

Belongs to the cytochrome P450 family. Requires heme as cofactor. As to expression, highly expressed in cotyledons, leaves, stems and siliques. Detected in flowers and lateral roots, but not in the main root. Expressed only in the vascular bundles in apical plant parts.

Its subcellular location is the endoplasmic reticulum membrane. It catalyses the reaction an L-polyhomomethionine + 2 reduced [NADPH--hemoprotein reductase] + 2 O2 = an (E)-omega-(methylsulfanyl)-alkanal oxime + 2 oxidized [NADPH--hemoprotein reductase] + CO2 + 3 H2O + 2 H(+). The catalysed reaction is L-dihomomethionine + 2 reduced [NADPH--hemoprotein reductase] + 2 O2 = (E)-5-(methylsulfanyl)pentanal oxime + 2 oxidized [NADPH--hemoprotein reductase] + CO2 + 3 H2O + 2 H(+). The enzyme catalyses L-trihomomethionine + 2 reduced [NADPH--hemoprotein reductase] + 2 O2 = (E)-6-(methylsulfanyl)hexanal oxime + 2 oxidized [NADPH--hemoprotein reductase] + CO2 + 3 H2O + 2 H(+). Catalyzes the conversion of the short chain elongated methionines di-, tri-, and tetrahomomethionine to their respective aldoximes 5-methylthiopentanaldoxime, 6-methylthiohexanaldoxime, and 7-methylheptanaldoxime. This chain is Dihomomethionine N-hydroxylase (CYP79F1), found in Arabidopsis thaliana (Mouse-ear cress).